A 116-amino-acid polypeptide reads, in one-letter code: Outer membrane protein assembly factor BamE (116 aa).

Residues 1–22 (MITMRCKMLTAAAVMLAMLTAG) form the signal peptide. Cys23 carries N-palmitoyl cysteine lipidation. The S-diacylglycerol cysteine moiety is linked to residue Cys23.

This sequence belongs to the BamE family. In terms of assembly, part of the Bam complex, which is composed of the outer membrane protein BamA, and four lipoproteins BamB, BamC, BamD and BamE.

It localises to the cell outer membrane. In terms of biological role, part of the outer membrane protein assembly complex, which is involved in assembly and insertion of beta-barrel proteins into the outer membrane. The sequence is that of Outer membrane protein assembly factor BamE from Yersinia pestis.